Here is a 429-residue protein sequence, read N- to C-terminus: Probable beta-1,3-galactosyl-O-glycosyl-glycoprotein beta-1,6-N-acetylglucosaminyltransferase 7 (429 aa).

Over 1–8 (MSQLRATK) the chain is Cytoplasmic. A helical; Signal-anchor for type II membrane protein membrane pass occupies residues 9–25 (PGILVCAAIGIFVFLYL). Over 26 to 429 (RNPTSEDPEE…ESHLNRRLNP (404 aa)) the chain is Extracellular. Cystine bridges form between Cys-53/Cys-205, Cys-139/Cys-354, Cys-160/Cys-187, and Cys-363/Cys-394. Residue Asn-87 is glycosylated (N-linked (GlcNAc...) asparagine). N-linked (GlcNAc...) asparagine glycosylation occurs at Asn-272.

This sequence belongs to the glycosyltransferase 14 family.

Its subcellular location is the golgi apparatus membrane. It participates in protein modification; protein glycosylation. Probable glycosyltransferase. The chain is Probable beta-1,3-galactosyl-O-glycosyl-glycoprotein beta-1,6-N-acetylglucosaminyltransferase 7 from Sus scrofa (Pig).